We begin with the raw amino-acid sequence, 507 residues long: Eukaryotic translation initiation factor 4E-binding protein Mextli homolog (507 aa).

Residues 126–163 (RPEGQHDPAPTVGIPPSATSPPTQVTSSVTSPVPSSPQ) form a disordered region. Positions 140 to 158 (PPSATSPPTQVTSSVTSPV) are enriched in low complexity. One can recognise a KH domain in the interval 242-307 (QLRHEMIIRN…EDIERAKDMI (66 aa)). 2 disordered regions span residues 314–360 (NMSP…DEDI) and 395–424 (ARPS…QQEP). The segment covering 329–348 (QYSGMSSENQSIPSQQNTAN) has biased composition (polar residues). Residues 349–360 (IDEDDDDDDEDI) are compositionally biased toward acidic residues.

As to quaternary structure, interacts with eukaryotic translation initiation factor ife-3.

The protein resides in the cytoplasm. In terms of biological role, plays a role in promoting translation. The chain is Eukaryotic translation initiation factor 4E-binding protein Mextli homolog from Caenorhabditis elegans.